Here is a 561-residue protein sequence, read N- to C-terminus: DNA ligase (561 aa).

ATP is bound at residue E253. K255 serves as the catalytic N6-AMP-lysine intermediate. Residues R260, R275, E304, F344, R421, and K427 each contribute to the ATP site.

The protein belongs to the ATP-dependent DNA ligase family. The cofactor is Mg(2+).

The enzyme catalyses ATP + (deoxyribonucleotide)n-3'-hydroxyl + 5'-phospho-(deoxyribonucleotide)m = (deoxyribonucleotide)n+m + AMP + diphosphate.. DNA ligase that seals nicks in double-stranded DNA during DNA replication, DNA recombination and DNA repair. This Halobacterium salinarum (strain ATCC 29341 / DSM 671 / R1) protein is DNA ligase.